A 343-amino-acid chain; its full sequence is S-adenosylmethionine:tRNA ribosyltransferase-isomerase (343 aa).

Belongs to the QueA family. As to quaternary structure, monomer.

It localises to the cytoplasm. The enzyme catalyses 7-aminomethyl-7-carbaguanosine(34) in tRNA + S-adenosyl-L-methionine = epoxyqueuosine(34) in tRNA + adenine + L-methionine + 2 H(+). It functions in the pathway tRNA modification; tRNA-queuosine biosynthesis. Transfers and isomerizes the ribose moiety from AdoMet to the 7-aminomethyl group of 7-deazaguanine (preQ1-tRNA) to give epoxyqueuosine (oQ-tRNA). The polypeptide is S-adenosylmethionine:tRNA ribosyltransferase-isomerase (Coxiella burnetii (strain CbuG_Q212) (Coxiella burnetii (strain Q212))).